The primary structure comprises 222 residues: Small ribosomal subunit protein uS3 (222 aa).

The KH type-2 domain occupies I39 to K108.

This sequence belongs to the universal ribosomal protein uS3 family. Part of the 30S ribosomal subunit. Forms a tight complex with proteins S10 and S14.

Its function is as follows. Binds the lower part of the 30S subunit head. Binds mRNA in the 70S ribosome, positioning it for translation. In Clostridium perfringens (strain ATCC 13124 / DSM 756 / JCM 1290 / NCIMB 6125 / NCTC 8237 / Type A), this protein is Small ribosomal subunit protein uS3.